A 105-amino-acid chain; its full sequence is Small ribosomal subunit protein uS10 (105 aa).

Belongs to the universal ribosomal protein uS10 family. Part of the 30S ribosomal subunit.

Functionally, involved in the binding of tRNA to the ribosomes. This Phytoplasma australiense protein is Small ribosomal subunit protein uS10.